Reading from the N-terminus, the 276-residue chain is Rhomboid protease GlpG (276 aa).

Helical transmembrane passes span 94 to 114 (GPVT…MQIL), 142 to 162 (ALMH…WYLG), 169 to 189 (LGSG…GYVQ), 192 to 212 (FSGP…GYVW), 229 to 249 (LIIF…GMSM), and 250 to 270 (ANGA…VDSL). Serine 201 functions as the Nucleophile in the catalytic mechanism. Histidine 254 is an active-site residue.

It belongs to the peptidase S54 family.

The protein localises to the cell inner membrane. It catalyses the reaction Cleaves type-1 transmembrane domains using a catalytic dyad composed of serine and histidine that are contributed by different transmembrane domains.. Its function is as follows. Rhomboid-type serine protease that catalyzes intramembrane proteolysis. The polypeptide is Rhomboid protease GlpG (Shigella boydii serotype 4 (strain Sb227)).